Consider the following 161-residue polypeptide: Allophycocyanin beta chain (161 aa).

Residue Asn-71 is modified to N4-methylasparagine. Cys-81 provides a ligand contact to (2R,3E)-phycocyanobilin.

Belongs to the phycobiliprotein family. As to quaternary structure, heterodimer of an alpha and a beta chain. Post-translationally, contains one covalently linked phycocyanobilin chromophore.

The protein localises to the plastid. It localises to the chloroplast thylakoid membrane. Functionally, light-harvesting photosynthetic bile pigment-protein from the phycobiliprotein complex. Allophycocyanin has a maximum absorption at approximately 650 nanometers. In Porphyra purpurea (Red seaweed), this protein is Allophycocyanin beta chain (apcB).